Here is a 101-residue protein sequence, read N- to C-terminus: Defensin-like protein 222 (101 aa).

A signal peptide spans 1–21 (MRTIVLFSTLMILVLSCMSNA). Disulfide bonds link cysteine 68-cysteine 85, cysteine 71-cysteine 90, and cysteine 75-cysteine 92.

It belongs to the DEFL family.

It is found in the secreted. This chain is Defensin-like protein 222, found in Arabidopsis thaliana (Mouse-ear cress).